A 395-amino-acid chain; its full sequence is Na(+)/H(+) antiporter NhaA (395 aa).

Transmembrane regions (helical) follow at residues 11-31 (FAME…ALII), 61-81 (LLLW…GLEV), 96-116 (IVLP…IYWF), 127-147 (GWAI…ALLG), 156-176 (LFLM…IAIF), 179-199 (GTLS…LVAM), 202-222 (MGVV…VCVL), 264-284 (FGIL…GVTL), 295-315 (IAVG…WMAV), 331-351 (VLGV…VGSL), and 366-386 (MGIL…TAAA).

Belongs to the NhaA Na(+)/H(+) (TC 2.A.33) antiporter family.

It is found in the cell inner membrane. It carries out the reaction Na(+)(in) + 2 H(+)(out) = Na(+)(out) + 2 H(+)(in). Its function is as follows. Na(+)/H(+) antiporter that extrudes sodium in exchange for external protons. The protein is Na(+)/H(+) antiporter NhaA of Pseudomonas fluorescens (strain ATCC BAA-477 / NRRL B-23932 / Pf-5).